The primary structure comprises 559 residues: Suppressor of tumorigenicity 7 protein-like (559 aa).

Helical transmembrane passes span 39-59, 83-103, and 513-533; these read GLAN…LYAL, FYVA…IFEW, and LPFF…LAFL.

It belongs to the ST7 family. In terms of tissue distribution, ubiquitously expressed.

The protein localises to the membrane. This Mus musculus (Mouse) protein is Suppressor of tumorigenicity 7 protein-like (St7l).